The primary structure comprises 267 residues: Regulatory protein RecX (267 aa).

This sequence belongs to the RecX family.

It localises to the cytoplasm. In terms of biological role, modulates RecA activity. The chain is Regulatory protein RecX from Staphylococcus epidermidis (strain ATCC 12228 / FDA PCI 1200).